A 160-amino-acid polypeptide reads, in one-letter code: D-aminoacyl-tRNA deacylase (160 aa).

A Gly-cisPro motif, important for rejection of L-amino acids motif is present at residues 146-147; sequence GP.

Belongs to the DTD family. As to quaternary structure, homodimer.

It localises to the cytoplasm. It catalyses the reaction glycyl-tRNA(Ala) + H2O = tRNA(Ala) + glycine + H(+). It carries out the reaction a D-aminoacyl-tRNA + H2O = a tRNA + a D-alpha-amino acid + H(+). In terms of biological role, an aminoacyl-tRNA editing enzyme that deacylates mischarged D-aminoacyl-tRNAs. Also deacylates mischarged glycyl-tRNA(Ala), protecting cells against glycine mischarging by AlaRS. Acts via tRNA-based rather than protein-based catalysis; rejects L-amino acids rather than detecting D-amino acids in the active site. By recycling D-aminoacyl-tRNA to D-amino acids and free tRNA molecules, this enzyme counteracts the toxicity associated with the formation of D-aminoacyl-tRNA entities in vivo and helps enforce protein L-homochirality. The chain is D-aminoacyl-tRNA deacylase from Desulfovibrio desulfuricans (strain ATCC 27774 / DSM 6949 / MB).